A 59-amino-acid polypeptide reads, in one-letter code: Cortexin domain-containing 1 protein (59 aa).

A helical transmembrane segment spans residues 17–37 (LTLACFVFLCLFLVVMIIRCA).

The protein resides in the membrane. The sequence is that of Cortexin domain-containing 1 protein from Homo sapiens (Human).